The primary structure comprises 276 residues: Insulin-induced gene 1 protein (276 aa).

Disordered regions lie at residues 1 to 26 and 49 to 73; these read MPRL…PRAS and AAHG…QGSS. At 1 to 83 the chain is on the cytoplasmic side; sequence MPRLDDHLWR…SHVNSWHHHL (83 aa). Basic residues predominate over residues 16–25; the sequence is GTKHRSHPRA. A helical transmembrane segment spans residues 84–106; the sequence is VQRSLVLFSVGVVLALVLNLLQV. At 107–125 the chain is on the extracellular side; it reads QRNVTLFPDEVIATIFSSA. The helical transmembrane segment at 126–143 threads the bilayer; that stretch reads WWVPPCCGTAAAVVGLLY. Residues 144-158 lie on the Cytoplasmic side of the membrane; it reads PCIDSHLGEPHKFKR. Residues Lys-155 and Lys-157 each participate in a glycyl lysine isopeptide (Lys-Gly) (interchain with G-Cter in ubiquitin) cross-link. Residues 159–181 traverse the membrane as a helical segment; sequence EWASVMRCVAVFVGINHASAKLD. Residues 182-184 lie on the Extracellular side of the membrane; sequence FAN. The helical transmembrane segment at 185–203 threads the bilayer; that stretch reads NVQLSLTLAALSLGLWWTF. At 204–208 the chain is on the cytoplasmic side; that stretch reads DRSRS. Ser-206 carries the post-translational modification Phosphoserine. A helical membrane pass occupies residues 209-230; that stretch reads GLGLGITIAFLATLITQLLVYN. Residues 231–244 are Extracellular-facing; the sequence is GVYQYTSPDFLYIR. Residues 245–262 form a helical membrane-spanning segment; the sequence is SWLPCIFFSGGVTVGNIG. Topologically, residues 263–276 are cytoplasmic; it reads RQLAMGVPEKPHSD. The KxHxx motif lies at 270–276; the sequence is PEKPHSD.

Belongs to the INSIG family. As to quaternary structure, interacts with SCAP; interaction is direct and only takes place in the presence of sterols; it prevents interaction between SCAP and the coat protein complex II (COPII). Associates with the SCAP-SREBP complex (composed of SCAP and SREBF1/SREBP1 or SREBF2/SREBP2); association is mediated via its interaction with SCAP and only takes place in the presence of sterols. Interaction with SCAP is mutually exclusive with PAQR3. Interacts with HMGCR (via its SSD); the interaction, accelerated by sterols, leads to the recruitment of HMGCR to AMFR/gp78 for its ubiquitination by the sterol-mediated ERAD pathway. Interacts with AMFR/gp78 (via its membrane domain); the interaction recruits HMCR at the ER membrane for its ubiquitination and degradation by the sterol-mediated ERAD pathway. Interacts with SOAT2/ACAT2; leading to promote recruitment of AMFR/gp78 and subsequent ubiquitination of SOAT2/ACAT2. Interacts with RNF139. Interacts with RNF145. In terms of processing, phosphorylation at Ser-206 by PCK1 reduces binding to oxysterol, disrupting the interaction between INSIG1 and SCAP, thereby promoting nuclear translocation of SREBP proteins (SREBF1/SREBP1 or SREBF2/SREBP2) and subsequent transcription of downstream lipogenesis-related genes. Post-translationally, ubiquitinated by AMFR/gp78 in response to sterol deprivation, leading to its degradation: when the SCAP-SREBP complex becomes dissociated from INSIG1, INSIG1 is then ubiquitinated and degraded in proteasomes. Although ubiquitination is required for rapid INSIG1 degradation, it is not required for release of the SCAP-SREBP complex. Ubiquitinated by RNF139.

The protein localises to the endoplasmic reticulum membrane. In terms of biological role, oxysterol-binding protein that mediates feedback control of cholesterol synthesis by controlling both endoplasmic reticulum to Golgi transport of SCAP and degradation of HMGCR. Acts as a negative regulator of cholesterol biosynthesis by mediating the retention of the SCAP-SREBP complex in the endoplasmic reticulum, thereby blocking the processing of sterol regulatory element-binding proteins (SREBPs) SREBF1/SREBP1 and SREBF2/SREBP2. Binds oxysterol, including 25-hydroxycholesterol, regulating interaction with SCAP and retention of the SCAP-SREBP complex in the endoplasmic reticulum. In presence of oxysterol, interacts with SCAP, retaining the SCAP-SREBP complex in the endoplasmic reticulum, thereby preventing SCAP from escorting SREBF1/SREBP1 and SREBF2/SREBP2 to the Golgi. Sterol deprivation or phosphorylation by PCK1 reduce oxysterol-binding, disrupting the interaction between INSIG1 and SCAP, thereby promoting Golgi transport of the SCAP-SREBP complex, followed by processing and nuclear translocation of SREBF1/SREBP1 and SREBF2/SREBP2. Also regulates cholesterol synthesis by regulating degradation of HMGCR: initiates the sterol-mediated ubiquitin-mediated endoplasmic reticulum-associated degradation (ERAD) of HMGCR via recruitment of the reductase to the ubiquitin ligases AMFR/gp78 and/or RNF139. Also regulates degradation of SOAT2/ACAT2 when the lipid levels are low: initiates the ubiquitin-mediated degradation of SOAT2/ACAT2 via recruitment of the ubiquitin ligases AMFR/gp78. In Bos taurus (Bovine), this protein is Insulin-induced gene 1 protein.